Reading from the N-terminus, the 393-residue chain is Arginine biosynthesis bifunctional protein ArgJ (393 aa).

The substrate site is built by Thr-145, Lys-171, Thr-182, Glu-265, Asn-388, and Ser-393. The Nucleophile role is filled by Thr-182.

Belongs to the ArgJ family. As to quaternary structure, heterotetramer of two alpha and two beta chains.

Its subcellular location is the cytoplasm. The enzyme catalyses N(2)-acetyl-L-ornithine + L-glutamate = N-acetyl-L-glutamate + L-ornithine. It carries out the reaction L-glutamate + acetyl-CoA = N-acetyl-L-glutamate + CoA + H(+). It participates in amino-acid biosynthesis; L-arginine biosynthesis; L-ornithine and N-acetyl-L-glutamate from L-glutamate and N(2)-acetyl-L-ornithine (cyclic): step 1/1. It functions in the pathway amino-acid biosynthesis; L-arginine biosynthesis; N(2)-acetyl-L-ornithine from L-glutamate: step 1/4. Functionally, catalyzes two activities which are involved in the cyclic version of arginine biosynthesis: the synthesis of N-acetylglutamate from glutamate and acetyl-CoA as the acetyl donor, and of ornithine by transacetylation between N(2)-acetylornithine and glutamate. In Nitratidesulfovibrio vulgaris (strain ATCC 29579 / DSM 644 / CCUG 34227 / NCIMB 8303 / VKM B-1760 / Hildenborough) (Desulfovibrio vulgaris), this protein is Arginine biosynthesis bifunctional protein ArgJ.